A 194-amino-acid polypeptide reads, in one-letter code: Putative manganese efflux pump MntP (194 aa).

The next 6 membrane-spanning stretches (helical) occupy residues 3 to 23 (PFSIVLIGFAMSTDAFAAAIG), 37 to 57 (LRAGLIFGCIEAITPVIGWLL), 69 to 89 (DHWIAFVLLGALGTHMIVAGL), 110 to 132 (LGLATTGFATSIDAMAVGVSLAF), 147 to 167 (CTFSMVTAGVMLGRALGNLIG), and 172 to 192 (MLGGLILVIVGSVILYEHLSG).

It belongs to the MntP (TC 9.B.29) family.

It is found in the cell inner membrane. Probably functions as a manganese efflux pump. In Xanthomonas axonopodis pv. citri (strain 306), this protein is Putative manganese efflux pump MntP.